Reading from the N-terminus, the 662-residue chain is Probable quinol oxidase subunit 1 (662 aa).

A run of 2 helical transmembrane segments spans residues 14–34 (WMITMAQIGAPFLVIGLIAVI) and 58–78 (LMYLICAVLMFVRGGIDALLL). H102 is a Fe(II)-heme a binding site. Helical transmembrane passes span 103–123 (GVIMIIFMAMPFVFGLWNVVV), 140–160 (ISFWLFFVGMILFNLSFIIGG), 187–207 (VAIQISGIGTLMTGINFFVTI), 228–248 (FITTLIVILAFPVFTVVLALM), 273–293 (FFWVWGHPEVYIVILPAFGIY), 311–331 (MVWATAGIAFLSFLVWVHHFF), 336–356 (GALINSFFSISTMLIGVPTGV), and 376–396 (MLFSLAFIPNFLLGGVTGVML). Cu cation-binding residues include H279, Y283, H328, and H329. Residues 279-283 (HPEVY) constitute a cross-link (1'-histidyl-3'-tyrosine (His-Tyr)). H414 contacts heme a3. A run of 5 helical transmembrane segments spans residues 415-435 (FHYTLVTGVVFACLAGLIFWY), 451-471 (CFWLFMIGFNVCFLPQFILGL), 492-512 (VISTIGALLMAVGFLFLVVSI), 586-605 (THTGVIMGIFMLLGGFFLIF), and 609-628 (IPAAICLVGILGSLVYQSFV). A Fe(II)-heme a-binding site is contributed by H416.

This sequence belongs to the heme-copper respiratory oxidase family. It depends on Cu cation as a cofactor. Ferriheme a is required as a cofactor. Requires Heme A3. as cofactor.

It localises to the cell membrane. It carries out the reaction 2 a quinol + O2 = 2 a quinone + 2 H2O. The protein operates within energy metabolism; oxidative phosphorylation. In terms of biological role, catalyzes quinol oxidation with the concomitant reduction of oxygen to water. The chain is Probable quinol oxidase subunit 1 (qoxB) from Staphylococcus haemolyticus (strain JCSC1435).